The chain runs to 272 residues: 3-deoxy-manno-octulosonate cytidylyltransferase (272 aa).

It belongs to the KdsB family.

The protein resides in the cytoplasm. The catalysed reaction is 3-deoxy-alpha-D-manno-oct-2-ulosonate + CTP = CMP-3-deoxy-beta-D-manno-octulosonate + diphosphate. It participates in nucleotide-sugar biosynthesis; CMP-3-deoxy-D-manno-octulosonate biosynthesis; CMP-3-deoxy-D-manno-octulosonate from 3-deoxy-D-manno-octulosonate and CTP: step 1/1. The protein operates within bacterial outer membrane biogenesis; lipopolysaccharide biosynthesis. Its function is as follows. Activates KDO (a required 8-carbon sugar) for incorporation into bacterial lipopolysaccharide in Gram-negative bacteria. The chain is 3-deoxy-manno-octulosonate cytidylyltransferase from Verminephrobacter eiseniae (strain EF01-2).